The sequence spans 350 residues: tRNA-splicing endonuclease (350 aa).

Active-site residues include tyrosine 286, histidine 297, and lysine 328.

Belongs to the tRNA-intron endonuclease family. Archaeal long subfamily. As to quaternary structure, homodimer.

It carries out the reaction pretRNA = a 3'-half-tRNA molecule with a 5'-OH end + a 5'-half-tRNA molecule with a 2',3'-cyclic phosphate end + an intron with a 2',3'-cyclic phosphate and a 5'-hydroxyl terminus.. Functionally, endonuclease that removes tRNA introns. Cleaves pre-tRNA at the 5'- and 3'-splice sites to release the intron. The products are an intron and two tRNA half-molecules bearing 2',3' cyclic phosphate and 5'-OH termini. Recognizes a pseudosymmetric substrate in which 2 bulged loops of 3 bases are separated by a stem of 4 bp. The protein is tRNA-splicing endonuclease of Methanosarcina acetivorans (strain ATCC 35395 / DSM 2834 / JCM 12185 / C2A).